Reading from the N-terminus, the 160-residue chain is 3-hydroxyacyl-[acyl-carrier-protein] dehydratase FabZ (160 aa).

His59 is a catalytic residue.

Belongs to the thioester dehydratase family. FabZ subfamily.

Its subcellular location is the cytoplasm. It carries out the reaction a (3R)-hydroxyacyl-[ACP] = a (2E)-enoyl-[ACP] + H2O. Its function is as follows. Involved in unsaturated fatty acids biosynthesis. Catalyzes the dehydration of short chain beta-hydroxyacyl-ACPs and long chain saturated and unsaturated beta-hydroxyacyl-ACPs. The sequence is that of 3-hydroxyacyl-[acyl-carrier-protein] dehydratase FabZ from Burkholderia thailandensis (strain ATCC 700388 / DSM 13276 / CCUG 48851 / CIP 106301 / E264).